A 395-amino-acid polypeptide reads, in one-letter code: Probable peptidoglycan glycosyltransferase FtsW (395 aa).

Over 1–24 (MADLAAGVAERGPRLSLWSSLDQR) the chain is Cytoplasmic. Residues 25–45 (LVWVVAATALLGLVMVASASI) traverse the membrane as a helical segment. Residues 46 to 62 (SMAEQATGDPFYFFKRQ) are Periplasmic-facing. A helical membrane pass occupies residues 63–83 (IFFALLGLGMALALLQIPLAT). The Cytoplasmic portion of the chain corresponds to 84-86 (WER). A helical membrane pass occupies residues 87-107 (AGPGLLLGALALLVLVLIPGV). Residues 108–116 (GREVNGAVR) lie on the Periplasmic side of the membrane. A helical transmembrane segment spans residues 117–137 (WIPLGVFNLQVAEVVKVLLAL). Over 138 to 152 (YLAGFLVRRQQQLRT) the chain is Cytoplasmic. Residues 153–173 (SMAAFLVPVLVSAACAFLLLL) traverse the membrane as a helical segment. At 174 to 178 (QPDFG) the chain is on the periplasmic side. A helical transmembrane segment spans residues 179 to 199 (TALMLMALAVGLLYLAGAPLW). Residue R200 is a topological domain, cytoplasmic. The chain crosses the membrane as a helical span at residues 201–221 (FAALVGVLAAAAAALVVYSPY). Residues 222-276 (RWQRVTAFMDPWSDPFNTGFQLTQSLIAIGRGDWLGVGLGGSVQKLFYLPEAHTD) lie on the Periplasmic side of the membrane. A helical membrane pass occupies residues 277 to 297 (FVFSVLAEELGWLGVLAVVLL). At 298 to 316 (FSYIVWRAMAVGWQCHRHR) the chain is on the cytoplasmic side. The helical transmembrane segment at 317–337 (LPFAGYLAWAVGLALGLQAFI) threads the bilayer. The Periplasmic segment spans residues 338–352 (NMGVATGLLPTKGLT). Residues 353-373 (LPLFSYGGSSALATGAMVGLL) traverse the membrane as a helical segment. At 374–395 (LRCGYELAQARAEGRRPEEAAS) the chain is on the cytoplasmic side.

It belongs to the SEDS family. FtsW subfamily.

The protein localises to the cell inner membrane. It carries out the reaction [GlcNAc-(1-&gt;4)-Mur2Ac(oyl-L-Ala-gamma-D-Glu-L-Lys-D-Ala-D-Ala)](n)-di-trans,octa-cis-undecaprenyl diphosphate + beta-D-GlcNAc-(1-&gt;4)-Mur2Ac(oyl-L-Ala-gamma-D-Glu-L-Lys-D-Ala-D-Ala)-di-trans,octa-cis-undecaprenyl diphosphate = [GlcNAc-(1-&gt;4)-Mur2Ac(oyl-L-Ala-gamma-D-Glu-L-Lys-D-Ala-D-Ala)](n+1)-di-trans,octa-cis-undecaprenyl diphosphate + di-trans,octa-cis-undecaprenyl diphosphate + H(+). The protein operates within cell wall biogenesis; peptidoglycan biosynthesis. Functionally, peptidoglycan polymerase that is essential for cell division. The sequence is that of Probable peptidoglycan glycosyltransferase FtsW from Halorhodospira halophila (strain DSM 244 / SL1) (Ectothiorhodospira halophila (strain DSM 244 / SL1)).